A 257-amino-acid polypeptide reads, in one-letter code: Acetylglutamate kinase (257 aa).

Substrate-binding positions include Gly43–Gly44, Arg65, and Asn157. Residues Asp180–Leu185 and Ile208–Thr210 contribute to the ATP site.

This sequence belongs to the acetylglutamate kinase family. ArgB subfamily. In terms of assembly, homodimer.

The protein resides in the cytoplasm. The enzyme catalyses N-acetyl-L-glutamate + ATP = N-acetyl-L-glutamyl 5-phosphate + ADP. It functions in the pathway amino-acid biosynthesis; L-arginine biosynthesis; N(2)-acetyl-L-ornithine from L-glutamate: step 2/4. Functionally, catalyzes the ATP-dependent phosphorylation of N-acetyl-L-glutamate. This chain is Acetylglutamate kinase, found in Enterobacter sp. (strain 638).